Reading from the N-terminus, the 1017-residue chain is Voltage-gated delayed rectifier potassium channel KCNH4 (1017 aa).

At 1–228 (MPVMKGLLAP…LLHYSVSKAI (228 aa)) the chain is on the cytoplasmic side. In terms of domain architecture, PAS spans 14-90 (FLDTIATRFD…QRLHKALEGH (77 aa)). The 53-residue stretch at 93-145 (HRAEICFYRKDGSAFWCLLDMMPIKNEMGEVVLFLFSFKDITQSGSPGLGPQG) folds into the PAC domain. Residues 138-157 (SPGLGPQGGRGDSNHENSLG) are disordered. Gly residues predominate over residues 139-148 (PGLGPQGGRG). Residues 229-249 (WDGLILLATFYVAVTVPYNVC) form a helical membrane-spanning segment. The Extracellular segment spans residues 250–259 (FSGDDDTPIT). A helical membrane pass occupies residues 260 to 280 (SRHTLVSDIAVEMLFILDIIL). At 281–302 (NFRTTYVSQSGQVISAPRSIGL) the chain is on the cytoplasmic side. A helical membrane pass occupies residues 303-323 (HYLATWFFIDLIAALPFDLLY). The Extracellular portion of the chain corresponds to 324–332 (IFNITVTSL). N-linked (GlcNAc...) asparagine glycosylation occurs at Asn326. The chain crosses the membrane as a helical; Voltage-sensor span at residues 333 to 353 (VHLLKTVRLLRLLRLLQKLER). Residues 354 to 361 (YSQCSAVV) are Cytoplasmic-facing. Residues 362–382 (LTLLMSVFALLAHWMACIWYV) form a helical membrane-spanning segment. Topologically, residues 383–427 (IGRREMEANDPLLWDIGWLHELGKRLEVPYVNGSVGGPSRRSAYI) are extracellular. N-linked (GlcNAc...) asparagine glycosylation occurs at Asn414. An intramembrane region (pore-forming) is located at residues 428-448 (AALYFTLSSLTSVGFGNVCAN). The short motif at 439–444 (SVGFGN) is the Selectivity filter element. Residues 449 to 482 (TDAEKIFSICTMLIGALMHAVVFGNVTAIIQRMY) lie on the Extracellular side of the membrane. N-linked (GlcNAc...) asparagine glycosylation occurs at Asn473. The chain crosses the membrane as a helical span at residues 483 to 503 (SRRSLYHSRMKDLKDFIRVHR). Over 504–1017 (LPRPLKQRML…SFQSRSDTFH (514 aa)) the chain is Cytoplasmic. Positions 556–620 (LFGAASRGCL…AILGKGDLIG (65 aa)) are cNMP-binding domain. The segment covering 691 to 724 (GSDTSGLSRFSRSPRLSQPRSESLGSSSDKTLPS) has biased composition (polar residues). 4 disordered regions span residues 691-749 (GSDT…LPNL), 772-803 (LVSS…RCSA), 821-875 (PDLS…EAEE), and 971-1017 (LLDL…DTFH). Residues 772–787 (LVSSPSLSPSLSPALA) are compositionally biased toward low complexity. Pro residues predominate over residues 978–1002 (ILPPYPSEPDPLGPSPVPEASPPTP). Positions 1008 to 1017 (SFQSRSDTFH) are enriched in polar residues.

The protein belongs to the potassium channel family. H (Eag) (TC 1.A.1.20) subfamily. Kv12.3/KCNH4 sub-subfamily. The potassium channel is probably composed of a homo- or heterotetrameric complex of pore-forming alpha subunits that can associate with modulating beta subunits. As to expression, detected only in brain, in particular in the telencephalon. Detected in putamen and caudate nucleus, and at lower levels in cerebral cortex, occipital and hippocampus.

It is found in the membrane. The catalysed reaction is K(+)(in) = K(+)(out). Its function is as follows. Pore-forming (alpha) subunit of a voltage-gated delayed rectifier. Activates at more negative voltages, exhibits fast prepulse-independent activation kinetics and deactivates much more slowly, but shows no inactivation. This is Voltage-gated delayed rectifier potassium channel KCNH4 from Homo sapiens (Human).